The sequence spans 132 residues: Small ribosomal subunit protein uS8 (132 aa).

This sequence belongs to the universal ribosomal protein uS8 family. Part of the 30S ribosomal subunit. Contacts proteins S5 and S12.

Functionally, one of the primary rRNA binding proteins, it binds directly to 16S rRNA central domain where it helps coordinate assembly of the platform of the 30S subunit. This Bifidobacterium adolescentis (strain ATCC 15703 / DSM 20083 / NCTC 11814 / E194a) protein is Small ribosomal subunit protein uS8.